The following is a 352-amino-acid chain: Septin-2B (352 aa).

The Septin-type G domain maps to 33–305 (KGFEFTLMVV…ENFRSERLKK (273 aa)). Residues 43–50 (GESGLGKS) form a G1 motif region. Residues 43–50 (GESGLGKS), Thr-77, Gly-103, 182–190 (KADTLTLRE), Gly-240, and Arg-255 each bind GTP. The tract at residues 100 to 103 (DTPG) is G3 motif. The interval 181–184 (AKAD) is G4 motif. Residues 259 to 269 (WGVVEVENPEH) form an important for dimerization region.

The protein belongs to the TRAFAC class TrmE-Era-EngA-EngB-Septin-like GTPase superfamily. Septin GTPase family. As to quaternary structure, septins polymerize into heterooligomeric protein complexes that form filaments, and associate with cellular membranes, actin filaments and microtubules. GTPase activity is required for filament formation. Can form heterooligomers with other family members and form filaments. Interacts with wdpcp.

It localises to the cytoplasm. The protein resides in the cytoskeleton. The protein localises to the spindle. Its subcellular location is the cleavage furrow. It is found in the midbody. It localises to the cell projection. The protein resides in the cilium membrane. Functionally, filament-forming cytoskeletal GTPase. Required for normal organization of the actin cytoskeleton. Plays a role in the biogenesis of polarized columnar-shaped epithelium. Required for the progression through mitosis through regulation of chromosome congression. During anaphase, may be required for chromosome segregation and spindle elongation. Probably plays a role in ciliogenesis and collective cell movements including convergent extension during gastrulation. In cilia, required for the integrity of the diffusion barrier at the base of the primary cilium that prevents diffusion of transmembrane proteins between the cilia and plasma membranes. Controls cell shape and not polarization of cells during convergent extension. The chain is Septin-2B (sept2-b) from Xenopus laevis (African clawed frog).